A 188-amino-acid chain; its full sequence is Pyridoxal 5'-phosphate synthase subunit PdxT (188 aa).

47 to 49 (GES) lines the L-glutamine pocket. Residue Cys79 is the Nucleophile of the active site. L-glutamine contacts are provided by residues Arg105 and 134–135 (IR). Active-site charge relay system residues include His170 and Glu172.

This sequence belongs to the glutaminase PdxT/SNO family. In the presence of PdxS, forms a dodecamer of heterodimers. Only shows activity in the heterodimer.

The catalysed reaction is aldehydo-D-ribose 5-phosphate + D-glyceraldehyde 3-phosphate + L-glutamine = pyridoxal 5'-phosphate + L-glutamate + phosphate + 3 H2O + H(+). It catalyses the reaction L-glutamine + H2O = L-glutamate + NH4(+). It participates in cofactor biosynthesis; pyridoxal 5'-phosphate biosynthesis. Catalyzes the hydrolysis of glutamine to glutamate and ammonia as part of the biosynthesis of pyridoxal 5'-phosphate. The resulting ammonia molecule is channeled to the active site of PdxS. This is Pyridoxal 5'-phosphate synthase subunit PdxT from Listeria monocytogenes serotype 4a (strain HCC23).